Consider the following 334-residue polypeptide: Phenazine-1-carboxylate N-methyltransferase (334 aa).

S-adenosyl-L-methionine-binding residues include Asp198 and Arg241.

Belongs to the class I-like SAM-binding methyltransferase superfamily. Cation-independent O-methyltransferase family. Homodimer in solution. Probably interacts transiently with PhzS.

The catalysed reaction is phenazine-1-carboxylate + S-adenosyl-L-methionine = 5-methyl-phenazine-1-carboxylate + S-adenosyl-L-homocysteine. Its pathway is secondary metabolite biosynthesis; pyocyanine biosynthesis. With respect to regulation, in vitro, requires PhzS for activity. In terms of biological role, involved in the biosynthesis of pyocyanine, a blue-pigmented phenazine derivative, which plays a role in virulence. Converts phenazine-1-carboxylate (PCA) to 5-methylphenazine-1-carboxylate (5-methyl-PCA). The chain is Phenazine-1-carboxylate N-methyltransferase from Pseudomonas aeruginosa (strain ATCC 15692 / DSM 22644 / CIP 104116 / JCM 14847 / LMG 12228 / 1C / PRS 101 / PAO1).